Consider the following 739-residue polypeptide: Nucleoprotein (739 aa).

A coiled-coil region spans residues 334–363; that stretch reads VNVGEQYQQLREAATEAEKQLQQYAESREL. Disordered stretches follow at residues 414–475 and 498–642; these read RPNL…YHDD and FELQ…IGQS. Residues 570 to 579 show a composition bias toward acidic residues; it reads TPIDQGDDDP. A compositionally biased stretch (basic and acidic residues) spans 614-624; the sequence is AEAHEPPHKSS. The segment covering 625 to 634 has biased composition (polar residues); sequence NEPAETSQLN.

This sequence belongs to the filoviruses nucleoprotein family. As to quaternary structure, homooligomer. Homomultimerizes to form the nucleocapsid. Binds to viral genomic RNA. Interacts with VP35 and VP30 to form the nucleocapsid. Interacts with host PPP2R5C; this interaction leads to VP30 dephosphorylation and viral transcription. Interacts with VP24; this interaction facilitates nucleocapsid assembly and genome packaging. Interacts with matrix protein VP40; this interaction allows recruitment of the nucleocapsid into progeny virions. Interacts with host STAU1. Interacts with host NXF1 (via RNA-binding domain); this interaction recruits NXF1 to the inclusion bodies were viral replication takes place, probably to export viral mRNA-NXF1 complexes from these sites. Interacts with host CCDC92; this interaction sequesters NP in the host cytoplasm. Interacts with host TRIM14. Phosphorylated and O-glycosylated by host. Acetylated by host EP300 in vitro.

The protein resides in the virion. The protein localises to the host cytoplasm. Its function is as follows. Oligomerizes into helical capsid to encapsidate the viral genome, protecting it from nucleases and the cellular innate immune response. VP35 binds to and stabilizes monomeric NP, keeping it soluble. Upon virus replication, NP is recruited to bind cooperatively viral genomic RNA and VP35 is released. The encapsidated genomic RNA is termed the nucleocapsid and serves as template for transcription and replication. The nucleocapsid is helical with a pitch of 10.81 NP per turn and a diameter of about 22nm. Each NP binds to six nucleotides of viral genomic RNA, three being exposed to the solvant and three hidden into the nucleocapsid. Also recruits host PPP2R5C phosphatase to dephosphorylate VP30 and thereby promote viral transcription. Upon virion assembly and budding, NP binds to VP24 and possibly host STAU1. The chain is Nucleoprotein (NP) from Homo sapiens (Human).